A 280-amino-acid chain; its full sequence is C-type lectin domain family 1 member A (280 aa).

Residues 1–44 (MQAKYSSTRDMLDDDGDTTMSLHSQGSATTRHPEPRRTEHRAPS) form a disordered region. Residues 1–52 (MQAKYSSTRDMLDDDGDTTMSLHSQGSATTRHPEPRRTEHRAPSSTWRPVAL) are Cytoplasmic-facing. Over residues 18-30 (TTMSLHSQGSATT) the composition is skewed to polar residues. Positions 31–42 (RHPEPRRTEHRA) are enriched in basic and acidic residues. The helical; Signal-anchor for type II membrane protein transmembrane segment at 53-73 (TLLTLCLVLLIGLAALGLLFF) threads the bilayer. Residues 74-280 (QYYQLSNTGQ…VPPETLGEGD (207 aa)) lie on the Extracellular side of the membrane. N-linked (GlcNAc...) asparagine glycosylation is found at N95 and N169. Residues 144-258 (HGDNCYQFYK…CKELKRCVCE (115 aa)) enclose the C-type lectin domain. Disulfide bonds link C165-C257 and C236-C249.

Expressed preferentially in dendritic cells.

Its subcellular location is the membrane. This chain is C-type lectin domain family 1 member A (CLEC1A), found in Homo sapiens (Human).